Reading from the N-terminus, the 73-residue chain is uncharacterized protein (73 aa).

This sequence belongs to the asfivirus DP63R family.

This is an uncharacterized protein from Ornithodoros (relapsing fever ticks).